We begin with the raw amino-acid sequence, 328 residues long: Phosphate acyltransferase (328 aa).

It belongs to the PlsX family. As to quaternary structure, homodimer. Probably interacts with PlsY.

It is found in the cytoplasm. It carries out the reaction a fatty acyl-[ACP] + phosphate = an acyl phosphate + holo-[ACP]. The protein operates within lipid metabolism; phospholipid metabolism. In terms of biological role, catalyzes the reversible formation of acyl-phosphate (acyl-PO(4)) from acyl-[acyl-carrier-protein] (acyl-ACP). This enzyme utilizes acyl-ACP as fatty acyl donor, but not acyl-CoA. The protein is Phosphate acyltransferase of Campylobacter jejuni (strain RM1221).